The sequence spans 900 residues: MKKRLLVSFLVLSIIVGLLSFQSLGNYNSGLKIGAWVGTQPSESAIKSFQELQGRKLDIVHQFINWSTDFSWVRPYADAVYNNGSILMITWEPWEYNTVDIKNGKADAYITRMAQDMKAYGKEIWLRPLHEANGDWYPWAIGYSSRVNTNETYIAAFRHIVDIFRANGATNVKWVFNVNCDNVGNGTSYLGHYPGDNYVDYTSIDGYNWGTTQSWGSQWQSFDQVFSRAYQALASINKPIIIAEFASAEIGGNKARWITEAYNSIRTSYNKVIAAVWFHENKETDWRINSSPEALAAYREAIGAGSSNPTPTPTWTSTPPSSSPKAVDPFEMVRKMGMGTNLGNTLEAPYEGSWSKSAMEYYFDDFKAAGYKNVRIPVRWDNHTMRTYPYTIDKAFLDRVEQVVDWSLSRGFVTIINSHHDDWIKEDYNGNIERFEKIWEQIAERFKNKSENLLFEIMNEPFGNITDEQIDDMNSRILKIIRKTNPTRIVIIGGGYWNSYNTLVNIKIPDDPYLIGTFHYYDPYEFTHKWRGTWGTQEDMDTVVRVFDFVKSWSDRNNIPVYFGEFAVMAYADRTSRVKWYDFISDAALERGFACSVWDNGVFGSLDNDMAIYNRDTRTFDTEILNALFNPGTYPSYSPKPSPTPRPTKPPVTPAVGEKMLDDFEGVLNWGSYSGEGAKVSTKIVSGKTGNGMEVSYTGTTDGYWGTVYSLPDGDWSKWLKISFDIKSVDGSANEIRFMIAEKSINGVGDGEHWVYSITPDSSWKTIEIPFSSFRRRLDYQPPGQDMSGTLDLDNIDSIHFMYANNKSGKFVVDNIKLIGATSDPTPSIKHGDLNFDNAVNSTDLLMLKRYILKSLELGTSEQEEKFKKAADLNRDNKVDSTDLTILKRYLLKAISEIPI.

The signal sequence occupies residues 1 to 44 (MKKRLLVSFLVLSIIVGLLSFQSLGNYNSGLKIGAWVGTQPSES). The GH26 domain occupies 45–298 (AIKSFQELQG…NSSPEALAAY (254 aa)). Glu131 functions as the Proton donor in the catalytic mechanism. Glu244 (nucleophile) is an active-site residue. The segment at 300–630 (EAIGAGSSNP…DTEILNALFN (331 aa)) is catalytic. Residues 303–326 (GAGSSNPTPTPTWTSTPPSSSPKA) form a disordered region. Positions 306 to 324 (SSNPTPTPTWTSTPPSSSP) are enriched in low complexity. Glu460 (proton donor) is an active-site residue. Glu565 serves as the catalytic Nucleophile. In terms of domain architecture, CBM11 spans 655–900 (AVGEKMLDDF…LLKAISEIPI (246 aa)). The 74-residue stretch at 827 to 900 (PSIKHGDLNF…LLKAISEIPI (74 aa)) folds into the Dockerin domain.

It in the N-terminal section; belongs to the glycosyl hydrolase 5 (cellulase A) family. This sequence in the C-terminal section; belongs to the glycosyl hydrolase 26 family.

The enzyme catalyses Endohydrolysis of (1-&gt;4)-beta-D-glucosidic linkages in cellulose, lichenin and cereal beta-D-glucans.. This enzyme catalyzes the endohydrolysis of 1,4-beta-glucosidic linkages in cellulose, lichenin and cereal beta-D-glucans. The protein is Endoglucanase H (celH) of Acetivibrio thermocellus (strain ATCC 27405 / DSM 1237 / JCM 9322 / NBRC 103400 / NCIMB 10682 / NRRL B-4536 / VPI 7372) (Clostridium thermocellum).